The chain runs to 115 residues: Hydrogenase maturation factor HypA (115 aa).

Residue H2 coordinates Ni(2+). Positions 74, 77, 90, and 93 each coordinate Zn(2+).

The protein belongs to the HypA/HybF family.

Its function is as follows. Involved in the maturation of [NiFe] hydrogenases. Required for nickel insertion into the metal center of the hydrogenase. The protein is Hydrogenase maturation factor HypA of Desulfosudis oleivorans (strain DSM 6200 / JCM 39069 / Hxd3) (Desulfococcus oleovorans).